The chain runs to 203 residues: MEGARLIIEEINKEAEQKIKYILEEAEQKAEKIKQEAEKKARIKADWIIRKAQTQAELEKQRIIANAKLEVRRKKLVLQEELINEVIGAIKDRLLSIPEAEYMEILKDLIVTGIRELGEEKVVLSSNGETLSLLKAHLKEMEESVNEKLGKDITISLGEPIETIGGVIVQNLEKTIRIDNTFEARMERLQADLRTKIAKILFG.

This sequence belongs to the V-ATPase E subunit family. Has multiple subunits with at least A(3), B(3), C, D, E, F, H, I and proteolipid K(x).

Its subcellular location is the cell membrane. Functionally, component of the A-type ATP synthase that produces ATP from ADP in the presence of a proton gradient across the membrane. This chain is A-type ATP synthase subunit E, found in Thermococcus sibiricus (strain DSM 12597 / MM 739).